The following is a 346-amino-acid chain: UPF0324 membrane protein FN0533 (346 aa).

Transmembrane regions (helical) follow at residues 5–22 (LYGI…WKLG), 27–49 (LVGG…KNRA), 62–81 (VLQY…TIIS), 86–108 (SLPI…AKLI), 115–137 (VILI…APVI), 147–169 (AISV…GDIL), 216–233 (LTRT…AVYN), 248–270 (IFPM…NYFI), 283–305 (INNV…MVAI), and 315–337 (ILSG…LVSI).

It belongs to the UPF0324 family.

It is found in the cell membrane. This is UPF0324 membrane protein FN0533 from Fusobacterium nucleatum subsp. nucleatum (strain ATCC 25586 / DSM 15643 / BCRC 10681 / CIP 101130 / JCM 8532 / KCTC 2640 / LMG 13131 / VPI 4355).